The following is a 554-amino-acid chain: Terpene synthase 17 (554 aa).

The Mg(2+) site is built by aspartate 306, aspartate 310, and glutamate 458. The DDXXD motif motif lies at 306–310; the sequence is DDTYD.

Belongs to the terpene synthase family. Tpsa subfamily. The cofactor is Mg(2+). Mn(2+) serves as cofactor.

The catalysed reaction is (2E,6E)-farnesyl diphosphate = (+)-valencene + diphosphate. The enzyme catalyses (2E,6E)-farnesyl diphosphate = (E)-beta-farnesene + diphosphate. It carries out the reaction (2E,6E)-farnesyl diphosphate = gamma-gurjunene + diphosphate. It catalyses the reaction (2Z,6Z)-farnesyl diphosphate = beta-bisabolene + diphosphate. The catalysed reaction is (2Z,6Z)-farnesyl diphosphate = (E)-gamma-bisabolene + diphosphate. The enzyme catalyses (2E)-geranyl diphosphate = limonene + diphosphate. It carries out the reaction (2E)-geranyl diphosphate = beta-myrcene + diphosphate. It catalyses the reaction (2E)-geranyl diphosphate = (E)-beta-ocimene + diphosphate. The catalysed reaction is (2E)-geranyl diphosphate = terpinolene + diphosphate. The enzyme catalyses (2E)-geranyl diphosphate = gamma-terpinene + diphosphate. It carries out the reaction (2Z,6Z)-farnesyl diphosphate = (Z)-gamma-bisabolene + diphosphate. It catalyses the reaction (2E,6E)-farnesyl diphosphate = (1S,5S,6R)-alpha-bergamotene + diphosphate. The catalysed reaction is (2Z,6Z)-farnesyl diphosphate = (1S,5S,6S)-alpha-bergamotene + diphosphate. Its pathway is secondary metabolite biosynthesis; terpenoid biosynthesis. Its function is as follows. Sesquiterpene synthase involved in the biosynthesis of volatile compounds. Mediates the conversion of (2E,6E)-farnesyl diphosphate (FPP) into gamma-gurjunene, (E)-beta-farnesene and (+)-valencene, and of (2Z,6Z)-farnesyl diphosphate ((ZZ)-FPP) into (E)-alpha-bergamotene and (Z)-gamma-bisabolene as well as beta-bisabolene, (Z)-alpha-bergamotene and (E)-gamma-bisabolene to a lower extent. Can act with a low efficiency as a monoterpene synthase with geranyl diphosphate (GPP) as substrate, thus producing beta-myrcene, (E)-beta-ocimene, limonene, terpinolene, gamma-terpinene and (Z)-beta-ocimene. The chain is Terpene synthase 17 from Solanum habrochaites (Wild tomato).